The following is a 285-amino-acid chain: Putative sugar uptake protein lmo0169 (285 aa).

The next 10 membrane-spanning stretches (helical) occupy residues 5 to 24 (IALI…SKIG), 31 to 48 (IIGT…VFIF), 53 to 71 (YTAT…WSLG), 84 to 106 (VSKT…GVFA), 116 to 135 (LVLG…LTSY), 151 to 173 (IITL…WFDI), 178 to 195 (AILP…LFSI), 207 to 226 (WLNM…LLFS), 232 to 254 (IATG…ILFL), and 263 to 282 (LILV…MIGI).

The protein belongs to the GRP transporter (TC 2.A.7.5) family.

Its subcellular location is the cell membrane. The protein is Putative sugar uptake protein lmo0169 of Listeria monocytogenes serovar 1/2a (strain ATCC BAA-679 / EGD-e).